Consider the following 259-residue polypeptide: Phosphate import ATP-binding protein PstB 1 (259 aa).

The 242-residue stretch at 13-254 (IQVRGLEFFY…PSKTQTEDYI (242 aa)) folds into the ABC transporter domain. 45-52 (GPSGCGKS) contacts ATP.

It belongs to the ABC transporter superfamily. Phosphate importer (TC 3.A.1.7) family. The complex is composed of two ATP-binding proteins (PstB), two transmembrane proteins (PstC and PstA) and a solute-binding protein (PstS).

Its subcellular location is the cell inner membrane. It catalyses the reaction phosphate(out) + ATP + H2O = ADP + 2 phosphate(in) + H(+). In terms of biological role, part of the ABC transporter complex PstSACB involved in phosphate import. Responsible for energy coupling to the transport system. In Pseudomonas savastanoi pv. phaseolicola (strain 1448A / Race 6) (Pseudomonas syringae pv. phaseolicola (strain 1448A / Race 6)), this protein is Phosphate import ATP-binding protein PstB 1.